The primary structure comprises 36 residues: Probable non-specific lipid-transfer protein (36 aa).

It belongs to the plant LTP family. Phosphorylated by Ca(2+)-dependent protein kinase.

Functionally, plant non-specific lipid-transfer proteins transfer phospholipids as well as galactolipids across membranes. May play a role in wax or cutin deposition in the cell walls of expanding epidermal cells and certain secretory tissues. The sequence is that of Probable non-specific lipid-transfer protein from Pinus pinea (Italian stone pine).